Here is a 184-residue protein sequence, read N- to C-terminus: ADP-ribosylation factor-like protein 8b (184 aa).

The note=Mediates targeting to membranes intramembrane region spans 1–18 (MGLWDALLNWLRSLFFKQ). Residues 29–34 (NAGKTS), 48–51 (MIPT), 70–74 (DLGGQ), and 129–132 (NKID) contribute to the GTP site.

It belongs to the small GTPase superfamily. Arf family. As to quaternary structure, interacts with tubulin.

The protein resides in the late endosome membrane. The protein localises to the lysosome membrane. Its subcellular location is the cytoplasm. It is found in the cytoskeleton. It localises to the spindle. Its function is as follows. May play a role in lysosome motility. May play a role in chromosome segregation. In terms of biological role, (Microbial infection) Component of tomato mosaic virus (ToMV) RNA replication complexes. Required for tobamovirus multiplication, especially for efficient negative-strand RNA synthesis and viral RNA capping. This Arabidopsis thaliana (Mouse-ear cress) protein is ADP-ribosylation factor-like protein 8b.